The primary structure comprises 492 residues: Transmembrane protein 104 homolog (492 aa).

The Cytoplasmic segment spans residues 1 to 18; the sequence is MQSNTDSSGTSGTYSQTV. Residues 19-39 traverse the membrane as a helical segment; it reads GLLYVFNLIVGTGALALPKAF. Residues 40–45 are Extracellular-facing; it reads QSAGWL. Residues 46 to 66 form a helical membrane-spanning segment; sequence LSISLLTFSAFMSYVAATFVI. Residues 67–114 are Cytoplasmic-facing; that stretch reads EALSVANAVLSKKRRVEYDDVVVADGPSTFEIAKKVEVSEMASMFLSK. A helical membrane pass occupies residues 115–135; sequence VSLVFSYFAIIIYLFGDLAIY. The Extracellular portion of the chain corresponds to 136-177; sequence STTVPKSAMNIVCSTINATIVKSSDPCHESWPEILTRMTVYR. N-linked (GlcNAc...) asparagine glycosylation occurs at N152. The helical transmembrane segment at 178–198 threads the bilayer; that stretch reads FFVIVFVVVVCLPMVIAGITK. Residues 199 to 210 are Cytoplasmic-facing; that stretch reads TRHIQIMTTLSR. Residues 211-231 traverse the membrane as a helical segment; the sequence is WAAFILMISLATMQLSSQGAA. Over 232-238 the chain is Extracellular; it reads AHPPAYN. The helical transmembrane segment at 239 to 259 threads the bilayer; sequence FHGFGSLFGCAVYAFMCHHSI. The Cytoplasmic portion of the chain corresponds to 260-275; the sequence is PSLITPMRTKENVFGK. A helical membrane pass occupies residues 276-296; the sequence is IAVVYGIVGVFYFTLSLTGAF. Topologically, residues 297-325 are extracellular; it reads AFEHVQDIYTLNFLHDDNTSLVYSIIDYF. N314 carries N-linked (GlcNAc...) asparagine glycosylation. A helical transmembrane segment spans residues 326 to 346; that stretch reads LALFPIITLTSSYPIIALTLI. At 347–391 the chain is on the cytoplasmic side; that stretch reads NNFKVVKDILCPKTGQENESLLEADNQVEDNDTDDEREARNGNPK. Over residues 367-382 the composition is skewed to acidic residues; that stretch reads LLEADNQVEDNDTDDE. The disordered stretch occupies residues 367-387; that stretch reads LLEADNQVEDNDTDDEREARN. A helical transmembrane segment spans residues 392–412; that stretch reads TIFDVLVPTLVLALPTFLSLL. The Extracellular portion of the chain corresponds to 413-415; the sequence is TDD. The chain crosses the membrane as a helical span at residues 416 to 436; it reads MLLLASITGSFPGVAVQFAIP. Over 437–466 the chain is Cytoplasmic; sequence CLLVTAARKHARSVLNFPVPRKNNSPFQSR. Residues 467–487 traverse the membrane as a helical segment; sequence FWIMLISSWAGFSMIMVLLNL. Topologically, residues 488 to 492 are extracellular; the sequence is VGVKF.

The protein belongs to the TMEM104 family.

The protein resides in the membrane. The protein is Transmembrane protein 104 homolog of Caenorhabditis briggsae.